Reading from the N-terminus, the 673-residue chain is Putative K(+)-stimulated pyrophosphate-energized sodium pump (673 aa).

5 helical membrane passes run 3–23 (SFIVYSVLAGVIALIFAFMLS), 62–82 (IVIVTVILAIFVGWQTAACFI), 84–104 (GAIFSIFAGYFGMNVATKANV), 127–147 (VMGMSVVGLGVVGIGIMYYIF), and 154–174 (VTGFGLGASSIALFARVGGGI). Position 177 (Lys-177) interacts with substrate. 4 residues coordinate Mg(2+): Asp-180, Asp-184, Asn-207, and Asp-210. Helical transmembrane passes span 222–242 (LFESYVGSIISALTLGTVVYA), 247–267 (VMFPLILSSIGIVASIIGILF), 279–299 (ALNTGTYIGGIIVIVSAAILS), 302–322 (IFGNLKAFFAVASGLVVGMII), 364–384 (LWPIVLISIGVLVSFFVMGGG), and 387–407 (AMVGLYGISLAAVGMLSTTGL). Residue Asp-419 coordinates Mg(2+). 4 helical membrane-spanning segments follow: residues 449-469 (AAIGKGFAIGSAALTALSLFA), 486-506 (VTLVGLFIGAMLPFLFGALTM), 553-573 (EMILPGVLAIVVPVAMGLLLG), and 576-596 (ALGGLLAGALVSGVLVGILMS). Ca(2+) contacts are provided by Asp-603, Asp-629, and Asp-633. Lys-636 contacts substrate. The chain crosses the membrane as a helical span at residues 652–672 (IVSLVFAPVVLQYGGILLNLI).

This sequence belongs to the H(+)-translocating pyrophosphatase (TC 3.A.10) family. K(+)-stimulated subfamily. As to quaternary structure, homodimer. Requires Mg(2+) as cofactor.

It localises to the cell membrane. The catalysed reaction is Na(+)(in) + diphosphate + H2O = Na(+)(out) + 2 phosphate + H(+). Its activity is regulated as follows. Requires K(+) for maximal activity. Its function is as follows. Sodium pump that utilizes the energy of pyrophosphate hydrolysis as the driving force for Na(+) movement across the membrane. This Clostridium tetani (strain Massachusetts / E88) protein is Putative K(+)-stimulated pyrophosphate-energized sodium pump.